We begin with the raw amino-acid sequence, 79 residues long: Sec-independent protein translocase protein TatA (79 aa).

Residues Met1–Gly21 form a helical membrane-spanning segment. Positions Val43 to Gly79 are disordered. Over residues Thr69 to Gly79 the composition is skewed to basic and acidic residues.

This sequence belongs to the TatA/E family. As to quaternary structure, the Tat system comprises two distinct complexes: a TatABC complex, containing multiple copies of TatA, TatB and TatC subunits, and a separate TatA complex, containing only TatA subunits. Substrates initially bind to the TatABC complex, which probably triggers association of the separate TatA complex to form the active translocon.

The protein resides in the cell inner membrane. Functionally, part of the twin-arginine translocation (Tat) system that transports large folded proteins containing a characteristic twin-arginine motif in their signal peptide across membranes. TatA could form the protein-conducting channel of the Tat system. In Delftia acidovorans (strain DSM 14801 / SPH-1), this protein is Sec-independent protein translocase protein TatA.